We begin with the raw amino-acid sequence, 1189 residues long: MRAVPTWVDKVHDRDKLEQSIYDLAFKPDGTQLIVAAGNRVLVYDTSDGTMIQPLKGHKDTVYCVAYAKDGKRFASGSADKSVIIWTSKLEGILKYTHNDSIQCVSYNPVTHQLASCSSSDFGLWSPEQKSVSKHKVSSKITCCSWTNDGQYLALGMFNGVVSIRNKNGEEKVKIERPGGALSPIWSICWNPSKDDHNDILAVADWGQKLSFYQLSGKQVGKDRVLGFDPCCVSYFSKGEYIIVSGSDKQVSLFTKDGVRLGPIGEQNSWVWTCRVKPDSNYVVIGCQDGTLAFYQLIFSTVHGLYKDRYAYRDSMTDVIVQHLITEQKVRIKCRELVKKIAIYKNRLAIQMPEKILIYELFSDDVNDMHYRVKEKIVKKFECNLLVVCSHHIILCQEKRLQCLSFKGVKEREWMMESLIRYIKVIGGPAGREGLLVGLKNGQILKIFVDNPFAITLLKQATSVRCLDMSASRNKLAVVDEHNTCLVYDITTKDLLFQEPNANSVAWNTQCEDMLCFSGGGYLNIKASNFPVHQQKLQGFVVGYNGSKIFCLHVYSMSAVEVPQSAPMYQYLERKMFREAYQIACLGVTDLDWKELAMEALEGLDFETAKKAFIRVRDLRYLELINSIEERKKRGDANDNLFLADVFAYQGKFHEAAKLYKKAGQESRALDMYTDLRMFEFAKEFLGSGDPKDTKTLITKQADWARNIREPRTAAEMYLSAGENMKAIELSGDHGWVDMLIEIARKLDKAEREPLLKCAYYFKKLQHHGYAAETYMKIGDLKALVRLYVETQRWEEAFALVEKNPEYKDEVYIPYAQWLAEHDRFEEAQKAFHKAGRQDEAVRVLEQLTHNAVVESRFNDAAYYYWMLSMQCLEISKDKEEKQDAMLQKFYHFQHLAELYHVYHSIHRYTDEPFSSHLPETLFNISRFLLHSLTKESPLGISKVNTLFTLAKQSKALGAYKLARQVYERLQGLRIPSRFLESIELGSITIRSKPFHDSEELIPMCYRCSTNNPFLNNLGNVCINCRQRFVFSASSYEVLPLVEFYLEDGISDEEAVSLVDLEAPRSSSKADSWREMSSGDTQTLRLDDGDDMMTYDPFTAKLSFEQGGSEFVPVVVNRAVLRTMSRRDVLIKRWPLPLKWQYFRSLLPDVSITMCPSCFQMFHTEDYELLVLQHNCCPYCRRPIEESSQ.

WD repeat units lie at residues 16 to 54, 57 to 97, 99 to 135, 137 to 175, 180 to 223, 225 to 264, 266 to 306, and 459 to 498; these read KLEQ…MIQP, GHKD…LKYT, NDSI…VSKH, VSSK…KVKI, GALS…VGKD, VLGF…LGPI, EQNS…HGLY, and KQAT…LLFQ.

In terms of assembly, component of the IFT complex A (IFT-A) complex.

It is found in the cell projection. The protein resides in the cilium. It localises to the cytoplasm. Its subcellular location is the cytoskeleton. The protein localises to the cilium basal body. Required for cilia formation during embryonal development. Acts as a negative regulator of Shh signaling. The sequence is that of Intraflagellar transport protein 122 homolog (ift122) from Xenopus tropicalis (Western clawed frog).